The primary structure comprises 349 residues: Ion-translocating oxidoreductase complex subunit D (349 aa).

3 consecutive transmembrane segments (helical) span residues Cys36–Ser56, Ser77–Val99, and Ala124–Ala144. At Thr185 the chain carries FMN phosphoryl threonine. 5 helical membrane passes run Ser212–Leu232, Trp239–Leu259, Ala265–Thr285, Ala291–Ile311, and Gly315–Ile335.

Belongs to the NqrB/RnfD family. The complex is composed of six subunits: RnfA, RnfB, RnfC, RnfD, RnfE and RnfG. The cofactor is FMN.

It localises to the cell inner membrane. Its function is as follows. Part of a membrane-bound complex that couples electron transfer with translocation of ions across the membrane. In Shewanella oneidensis (strain ATCC 700550 / JCM 31522 / CIP 106686 / LMG 19005 / NCIMB 14063 / MR-1), this protein is Ion-translocating oxidoreductase complex subunit D.